The primary structure comprises 66 residues: Protein translocase subunit SecE (66 aa).

A helical membrane pass occupies residues 29-49 (LIASTLVVVAAVFIFSLICLV).

This sequence belongs to the SecE/SEC61-gamma family. As to quaternary structure, component of the Sec protein translocase complex. Heterotrimer consisting of SecY, SecE and SecG subunits. The heterotrimers can form oligomers, although 1 heterotrimer is thought to be able to translocate proteins. Interacts with the ribosome. Interacts with SecDF, and other proteins may be involved. Interacts with SecA.

The protein resides in the cell inner membrane. Its function is as follows. Essential subunit of the Sec protein translocation channel SecYEG. Clamps together the 2 halves of SecY. May contact the channel plug during translocation. In Rickettsia typhi (strain ATCC VR-144 / Wilmington), this protein is Protein translocase subunit SecE.